Consider the following 264-residue polypeptide: GATA transcription factor 2 (264 aa).

Positions 29-42 (SSSGGSTAATSSSS) are enriched in low complexity. Disordered regions lie at residues 29-57 (SSSGGSTAATSSSSFPPPQNPSFHHHHLP) and 96-192 (NPLG…TPQW). A compositionally biased stretch (polar residues) spans 101–110 (TMTSVKTETS). The short motif at 114 to 121 (KPRSKRSR) is the Nuclear localization signal element. A compositionally biased stretch (gly residues) spans 155-164 (SGGGGGGGGR). A GATA-type zinc finger spans residues 175-229 (GGGMRRCTHCASEKTPQWRTGPLGPKTLCNACGVRFKSGRLVPEYRPASSPTFVL).

This sequence belongs to the type IV zinc-finger family. Class A subfamily. In terms of tissue distribution, mostly expressed in roots. Also expressed in flowers and leaves, and to a lower extent in stems.

It is found in the nucleus. In terms of biological role, transcriptional activator that specifically binds 5'-GATA-3' or 5'-GAT-3' motifs within gene promoters. May be involved in the regulation of some light-responsive genes. This Arabidopsis thaliana (Mouse-ear cress) protein is GATA transcription factor 2 (GATA2).